The sequence spans 671 residues: DNA ligase (671 aa).

NAD(+) contacts are provided by residues 32-36 (DAEYD), 81-82 (SL), and Glu113. The active-site N6-AMP-lysine intermediate is the Lys115. The NAD(+) site is built by Arg136, Glu173, Lys290, and Lys314. Zn(2+) contacts are provided by Cys408, Cys411, Cys426, and Cys432. The 79-residue stretch at 593-671 (EIDSPFAGKT…EAEMLRLLGS (79 aa)) folds into the BRCT domain.

The protein belongs to the NAD-dependent DNA ligase family. LigA subfamily. Requires Mg(2+) as cofactor. Mn(2+) serves as cofactor.

The catalysed reaction is NAD(+) + (deoxyribonucleotide)n-3'-hydroxyl + 5'-phospho-(deoxyribonucleotide)m = (deoxyribonucleotide)n+m + AMP + beta-nicotinamide D-nucleotide.. Functionally, DNA ligase that catalyzes the formation of phosphodiester linkages between 5'-phosphoryl and 3'-hydroxyl groups in double-stranded DNA using NAD as a coenzyme and as the energy source for the reaction. It is essential for DNA replication and repair of damaged DNA. The chain is DNA ligase from Shigella sonnei (strain Ss046).